Consider the following 449-residue polypeptide: Chromogranin-A (449 aa).

An N-terminal signal peptide occupies residues 1-18 (MRSAAVLALLLCAGQVIA). A disulfide bond links cysteine 35 and cysteine 56. A disordered region spans residues 87–431 (AKERTHQQKK…EDQELESLSA (345 aa)). Serine 99 carries the post-translational modification Phosphoserine. The span at 107–140 (VLEKPNDQAEPKEVTEEVSSKDAAEKRDDFKEVE) shows a compositional bias: basic and acidic residues. Serine 142 carries the phosphoserine modification. Serine 185 is a glycosylation site (O-linked (GalNAc...) serine). A Phosphotyrosine modification is found at tyrosine 191. A Phosphoserine modification is found at serine 200. O-linked (GalNAc...) serine glycosylation is present at serine 204. Serine 215 carries the phosphoserine modification. Over residues 233 to 242 (EAEAREKAVP) the composition is skewed to basic and acidic residues. The O-linked (GalNAc...) threonine glycan is linked to threonine 249. The segment covering 279 to 297 (GAEEAKPPEGKGEWAHSRQ) has biased composition (basic and acidic residues). Serine 295 bears the Phosphoserine mark. Glycine amide is present on glycine 312. Residues serine 315, serine 325, and serine 363 each carry the phosphoserine modification. Residues 323 to 351 (QLSKEWEDAKRWSKMDQLAKELTAEKRLE) show a composition bias toward basic and acidic residues. Methionine 364 is subject to Methionine sulfoxide. 4 positions are modified to phosphoserine: serine 390, serine 394, serine 416, and serine 430. Over residues 406–423 (YPEEKKEEEGSANRRPED) the composition is skewed to basic and acidic residues. The O-linked (Xyl...) (chondroitin sulfate) serine glycan is linked to serine 416.

This sequence belongs to the chromogranin/secretogranin protein family. Self-interacts; self-assembly is promoted in vitro by chondroitin sulfate attachment which occurs at mildly acidic pH conditions. Interacts with SCG3. Interacts with ITPR1 in the secretory granules. Post-translationally, in secretory granules, is attacked at both N- and C-terminal sides by proteolytic enzymes generating numerous peptides of various activities. Proteolytic processing can give rise to additional longer forms of catestatin peptides which display a less potent catecholamine release-inhibitory activity. O-glycosylated; contains chondroitin sulfate (CS). CS attachment is pH-dependent, being observed at mildly acidic conditions of pH 5 but not at neutral pH, and promotes self-assembly in vitro. In terms of tissue distribution, highest concentration of GE-25 found in adrenal medulla with lower levels present in the pituitary, the intestinal mucosa and the pancreas. Also found in the brain.

It localises to the secreted. The protein resides in the cytoplasmic vesicle. Its subcellular location is the secretory vesicle. It is found in the neuronal dense core vesicle. Strongly inhibits glucose induced insulin release from the pancreas. In terms of biological role, completely inhibits catecholamine release from chromaffin cells. Its function is as follows. Has antibacterial activity against M.luteus. Not active against E.coli. Functionally, inhibits catecholamine release from chromaffin cells and noradrenergic neurons by acting as a non-competitive nicotinic cholinergic antagonist. Displays antibacterial activity against Gram-positive bacteria M.luteus and B.megaterium, and Gram-negative bacteria E.coli, and antifungal activity against a variety of filamentous fungi including A.fumigatus, N.hematococca, F.culmorum, F.oxyporum, T.mentagrophytes and several forms of Candida: C.albicans, C.tropicalis, C.glabrata and C.neoform. Can induce mast cell migration, degranulation and production of cytokines and chemokines. Has antibacterial activity against Gram-positive bacteria M.luteus, B.megaterium. Not active against Gram-positive bacteria B.cereus, B.subtilis, S.pyogenes, M.fortuitum, S.aureus and L.monocytogenes and against Gram-negative bacteria E.coli, E.cloacae, S.typhimurium, K.pneumoniae and P.aeruginosa. Possesses antifungal activity against N.crassa, A.fumigatus, A.brassicicola, N.hematococca, F.culmorum and F.oxyporum and against the yeast S.cerevisiae and C.albicans. Inactive against A.benhamiae. In terms of biological role, has antifungal activity against N.crassa, A.fumigatus, A.brassicicola, N.hematococca, F.culmorum, F.oxyporum, A.benhamiae, C.neoformans, as well as against yeasts C.albicans, and C.tropicalis. Seems to be inactive against C.glabrata. Interacts with the fungal cell wall, crosses the plasma membrane and accumulates in fungal cells where it inhibits calcineurin activity. Its function is as follows. Regulates granule biogenesis in endocrine cells by up-regulating the transcription of protease nexin 1 (SERPINE2) via a cAMP-PKA-SP1 pathway. This leads to inhibition of granule protein degradation in the Golgi complex which in turn promotes granule formation. The sequence is that of Chromogranin-A (CHGA) from Bos taurus (Bovine).